We begin with the raw amino-acid sequence, 142 residues long: Small heat shock protein IbpB (142 aa).

The 112-residue stretch at 26-137 folds into the sHSP domain; that stretch reads AGESQSFPPY…APQRIAISER (112 aa).

Belongs to the small heat shock protein (HSP20) family. As to quaternary structure, homodimer. Forms homomultimers of about 100-150 subunits at optimal growth temperatures. Conformation changes to oligomers at high temperatures or high ionic concentrations. The decrease in size of the multimers is accompanied by an increase in chaperone activity.

The protein localises to the cytoplasm. In terms of biological role, associates with aggregated proteins, together with IbpA, to stabilize and protect them from irreversible denaturation and extensive proteolysis during heat shock and oxidative stress. Aggregated proteins bound to the IbpAB complex are more efficiently refolded and reactivated by the ATP-dependent chaperone systems ClpB and DnaK/DnaJ/GrpE. Its activity is ATP-independent. This chain is Small heat shock protein IbpB, found in Klebsiella pneumoniae (strain 342).